The chain runs to 350 residues: HTH-type DNA-binding transcriptional activator EutR (350 aa).

Positions 243–344 (SRAREYVLEN…AEKPSLTLHQ (102 aa)) constitute an HTH araC/xylS-type domain. 2 consecutive DNA-binding regions (H-T-H motif) follow at residues 260-281 (LDLC…HAIL) and 311-334 (VKDA…QQLF).

The protein operates within amine and polyamine degradation; ethanolamine degradation. Activates the transcription of the eut operon, allowing utilization of ethanolamine (EA). Positively regulates its own transcription. Probably binds EA and vitamin B12 as effectors. Competes with ethanolamine ammonia-lysase (EAL, the first enzyme in the EA degradation pathway) for adenosylcobalamin. Ethanolamine-associated signaling mediated via this protein, but not EA degradation, impacts S.typhimurium survival within macrophages. Binds the promoter of ssrB and eutS in vitro; in mouse infection models binding to ssrB probably induces all 4 operons of pathogenicity island SPI-2. Functionally, expression of the eut operon allows this bacteria to use ethanolamine (EA) as a carbon, nitrogen and energy source. It relies on cobalamin (vitamin B12) both as a cofactor for the ethanolamine ammonia-lyase (EAL) activity and to induce the operon. EA enhances bacterial survival in macrophages in a concentration-dependent manner, suggesting it is an important nutrient in infection. In Salmonella typhimurium (strain LT2 / SGSC1412 / ATCC 700720), this protein is HTH-type DNA-binding transcriptional activator EutR.